Here is a 115-residue protein sequence, read N- to C-terminus: Succinate dehydrogenase assembly factor 3, mitochondrial (115 aa).

This sequence belongs to the complex I LYR family. SDHAF3 subfamily. Interacts with the iron-sulfur protein subunit within the SDH catalytic dimer.

It localises to the mitochondrion matrix. Functionally, plays an essential role in the assembly of succinate dehydrogenase (SDH), an enzyme complex (also referred to as respiratory complex II) that is a component of both the tricarboxylic acid (TCA) cycle and the mitochondrial electron transport chain, and which couples the oxidation of succinate to fumarate with the reduction of ubiquinone (coenzyme Q) to ubiquinol. Promotes maturation of the iron-sulfur protein subunit of the SDH catalytic dimer, protecting it from the deleterious effects of oxidants. May act together with SDHAF1. The chain is Succinate dehydrogenase assembly factor 3, mitochondrial (acn9) from Nematostella vectensis (Starlet sea anemone).